Here is a 166-residue protein sequence, read N- to C-terminus: UPF0254 protein Mevan_0254 (166 aa).

This sequence belongs to the UPF0254 family.

The protein is UPF0254 protein Mevan_0254 of Methanococcus vannielii (strain ATCC 35089 / DSM 1224 / JCM 13029 / OCM 148 / SB).